A 277-amino-acid chain; its full sequence is Urease accessory protein UreD (277 aa).

This sequence belongs to the UreD family. As to quaternary structure, ureD, UreF and UreG form a complex that acts as a GTP-hydrolysis-dependent molecular chaperone, activating the urease apoprotein by helping to assemble the nickel containing metallocenter of UreC. The UreE protein probably delivers the nickel.

It localises to the cytoplasm. Its function is as follows. Required for maturation of urease via the functional incorporation of the urease nickel metallocenter. The protein is Urease accessory protein UreD of Pseudomonas putida (strain GB-1).